The chain runs to 146 residues: uncharacterized protein (146 aa).

The first 17 residues, 1-17 (MKRLLILTALLPFVGFA), serve as a signal peptide directing secretion. Disordered regions lie at residues 27–54 (NQPG…KGML) and 70–146 (ENQI…TIGP). The span at 32 to 54 (QIPSQQRMQTQMQTQQIQQKGML) shows a compositional bias: low complexity. Residues 77–118 (SQRVLQSQPGERNPARQQMLPNTNGGMLNSNRNPDSSLNQQH) show a composition bias toward polar residues.

This is an uncharacterized protein from Escherichia coli (strain K12).